The sequence spans 120 residues: Succinate dehydrogenase membrane anchor subunit (120 aa).

Over 1–17 (MTEKLLHFIRTKSGSMH) the chain is Mitochondrial matrix. A helical transmembrane segment spans residues 18–38 (WWLQRFLAILLAPIILYLLFD). Over 39–63 (VAIYIGQQSDPTVMMFLNRIFNHNS) the chain is Mitochondrial intermembrane. Residues 64 to 85 (IFIFITSVILIWHVRGGMEVII) form a helical membrane-spanning segment. H76 provides a ligand contact to heme. Residues 86–95 (EDYVHGEKTR) are Mitochondrial matrix-facing. An a ubiquinone-binding site is contributed by Y88. The helical transmembrane segment at 96 to 120 (IVSIFLIRVIAIEIMEYLYKCSIIF) threads the bilayer.

In terms of assembly, part of an enzyme complex containing four subunits: a flavoprotein, an iron-sulfur protein, plus two membrane-anchoring proteins. The cofactor is heme.

The protein localises to the mitochondrion inner membrane. Its pathway is carbohydrate metabolism; tricarboxylic acid cycle. Functionally, membrane-anchoring subunit of succinate dehydrogenase (SDH). The sequence is that of Succinate dehydrogenase membrane anchor subunit (SDH4) from Reclinomonas americana.